A 149-amino-acid polypeptide reads, in one-letter code: UPF0178 protein SE_0451 (149 aa).

It belongs to the UPF0178 family.

This chain is UPF0178 protein SE_0451, found in Staphylococcus epidermidis (strain ATCC 12228 / FDA PCI 1200).